The chain runs to 503 residues: Arabinose import ATP-binding protein AraG 1 (503 aa).

ABC transporter domains are found at residues 5 to 240 (LRFD…MVGR) and 251 to 497 (RALG…LPQT). Residue 37–44 (GENGAGKS) participates in ATP binding.

The protein belongs to the ABC transporter superfamily. Arabinose importer (TC 3.A.1.2.2) family. The complex is composed of two ATP-binding proteins (AraG), two transmembrane proteins (AraH) and a solute-binding protein (AraF).

It localises to the cell inner membrane. It carries out the reaction L-arabinose(out) + ATP + H2O = L-arabinose(in) + ADP + phosphate + H(+). In terms of biological role, part of the ABC transporter complex AraFGH involved in arabinose import. Responsible for energy coupling to the transport system. This Burkholderia lata (strain ATCC 17760 / DSM 23089 / LMG 22485 / NCIMB 9086 / R18194 / 383) protein is Arabinose import ATP-binding protein AraG 1.